A 433-amino-acid polypeptide reads, in one-letter code: Metacaspase-1 (433 aa).

Residues 1-123 form a disordered region; that stretch reads MYPGRAKPTY…PPSQVQHTGP (123 aa). A compositionally biased stretch (low complexity) spans 9 to 44; the sequence is TYNNQQAQQAQSQVGYQTGYSNAQPQQQYYTAPQQQ. Composition is skewed to polar residues over residues 45-55 and 83-109; these read NVSGSSMSFQH and QQNYRNDIQQNHASGTVNGPSGYQQPQ. Residues His-222 and Cys-278 contribute to the active site.

It belongs to the peptidase C14B family.

Functionally, involved in cell death (apoptosis). The sequence is that of Metacaspase-1 (MCA1) from Kluyveromyces lactis (strain ATCC 8585 / CBS 2359 / DSM 70799 / NBRC 1267 / NRRL Y-1140 / WM37) (Yeast).